We begin with the raw amino-acid sequence, 508 residues long: MTEPIQPQAAVAADENQIVAERRDKLRALRDQGIAYPNDFQPTHHAADLQTAYADADKEALEAKSLEVAIAGRMMLKRVMGKASFATVQDGSGQIQFFVTPADVGAETYDAFKKWDLGDIVAARGVLFRTNKGELSVKCTQLRLLAKALRPLPDKFHGLADQETRYRQRYVDLIVTPETRTTFRARTKAIASIRKFMGDADFMEVETPMLHPIPGGAAAKPFVTHHNALDMEMFLRIAPELYLKRLIVGGFERVFEINRNFRNEGVSPRHNPEFTMMEFYAAYTDYRWLMDFTERLIRQAAVDALGTATIQYQGRELDLAQPFHRLTITQAIQKYAPSYTDGQLSDDAFLRSELKRLGVDVTQPAFLNAGIGALQLALFEETAEAQLWEPTFIIDYPIEVSPLARESDTVAGITERFELFITGREIANGFSELNDPEDQAARFKKQVEQKDAGDEEAMFFDADYIRALEYGMPPTGGCGIGIDRLVMLLTDSPTIRDVLLFPHLRRED.

Residues Glu418 and Glu425 each contribute to the Mg(2+) site.

Belongs to the class-II aminoacyl-tRNA synthetase family. As to quaternary structure, homodimer. Requires Mg(2+) as cofactor.

It localises to the cytoplasm. The enzyme catalyses tRNA(Lys) + L-lysine + ATP = L-lysyl-tRNA(Lys) + AMP + diphosphate. The chain is Lysine--tRNA ligase from Burkholderia thailandensis (strain ATCC 700388 / DSM 13276 / CCUG 48851 / CIP 106301 / E264).